Consider the following 737-residue polypeptide: Phosphoribosylformylglycinamidine synthase subunit PurL (737 aa).

His50 is a catalytic residue. Positions 53 and 92 each coordinate ATP. Glu94 is a Mg(2+) binding site. Residues 95–98 (SHNH) and Arg117 each bind substrate. The active-site Proton acceptor is the His96. Asp118 serves as a coordination point for Mg(2+). Residue Gln241 participates in substrate binding. Asp269 is a Mg(2+) binding site. 313 to 315 (ESQ) is a binding site for substrate. ATP-binding residues include Asp494 and Gly531. Mg(2+) is bound at residue Asn532. Ser534 lines the substrate pocket.

It belongs to the FGAMS family. Monomer. Part of the FGAM synthase complex composed of 1 PurL, 1 PurQ and 2 PurS subunits.

It localises to the cytoplasm. It catalyses the reaction N(2)-formyl-N(1)-(5-phospho-beta-D-ribosyl)glycinamide + L-glutamine + ATP + H2O = 2-formamido-N(1)-(5-O-phospho-beta-D-ribosyl)acetamidine + L-glutamate + ADP + phosphate + H(+). It participates in purine metabolism; IMP biosynthesis via de novo pathway; 5-amino-1-(5-phospho-D-ribosyl)imidazole from N(2)-formyl-N(1)-(5-phospho-D-ribosyl)glycinamide: step 1/2. Its function is as follows. Part of the phosphoribosylformylglycinamidine synthase complex involved in the purines biosynthetic pathway. Catalyzes the ATP-dependent conversion of formylglycinamide ribonucleotide (FGAR) and glutamine to yield formylglycinamidine ribonucleotide (FGAM) and glutamate. The FGAM synthase complex is composed of three subunits. PurQ produces an ammonia molecule by converting glutamine to glutamate. PurL transfers the ammonia molecule to FGAR to form FGAM in an ATP-dependent manner. PurS interacts with PurQ and PurL and is thought to assist in the transfer of the ammonia molecule from PurQ to PurL. The polypeptide is Phosphoribosylformylglycinamidine synthase subunit PurL (Rhodopseudomonas palustris (strain BisA53)).